The sequence spans 275 residues: NH(3)-dependent NAD(+) synthetase (275 aa).

Gly46–Ser53 contacts ATP. Asp52 is a binding site for Mg(2+). Arg140 serves as a coordination point for deamido-NAD(+). An ATP-binding site is contributed by Thr160. Glu165 is a Mg(2+) binding site. Deamido-NAD(+) contacts are provided by Lys173 and Asp180. The ATP site is built by Lys189 and Thr211. Deamido-NAD(+) is bound at residue His260–Lys261.

This sequence belongs to the NAD synthetase family. In terms of assembly, homodimer.

It catalyses the reaction deamido-NAD(+) + NH4(+) + ATP = AMP + diphosphate + NAD(+) + H(+). The protein operates within cofactor biosynthesis; NAD(+) biosynthesis; NAD(+) from deamido-NAD(+) (ammonia route): step 1/1. Its function is as follows. Catalyzes the ATP-dependent amidation of deamido-NAD to form NAD. Uses ammonia as a nitrogen source. This is NH(3)-dependent NAD(+) synthetase from Salmonella heidelberg (strain SL476).